A 475-amino-acid chain; its full sequence is Glutamate--tRNA ligase 2 (475 aa).

The short motif at proline 9–serine 19 is the 'HIGH' region element. The short motif at lysine 238–arginine 242 is the 'KMSKS' region element. Residue lysine 241 participates in ATP binding.

This sequence belongs to the class-I aminoacyl-tRNA synthetase family. Glutamate--tRNA ligase type 1 subfamily. Monomer.

It localises to the cytoplasm. It carries out the reaction tRNA(Glu) + L-glutamate + ATP = L-glutamyl-tRNA(Glu) + AMP + diphosphate. Its function is as follows. Catalyzes the attachment of glutamate to tRNA(Glu) in a two-step reaction: glutamate is first activated by ATP to form Glu-AMP and then transferred to the acceptor end of tRNA(Glu). This chain is Glutamate--tRNA ligase 2, found in Bartonella quintana (strain Toulouse) (Rochalimaea quintana).